Here is an 89-residue protein sequence, read N- to C-terminus: UPF0367 protein PCC8801_1959 (89 aa).

Belongs to the UPF0367 family.

This chain is UPF0367 protein PCC8801_1959, found in Rippkaea orientalis (strain PCC 8801 / RF-1) (Cyanothece sp. (strain PCC 8801)).